Consider the following 853-residue polypeptide: Cytochrome P450 monooxygenase mpaDE (853 aa).

At 1–6 (MKSLSL) the chain is on the lumenal side. The chain crosses the membrane as a helical span at residues 7–29 (TWITAVAVVLYLVQRYVRSYWRL). Residues 30–853 (KDIPGPVLAK…DIENSIEGQK (824 aa)) lie on the Cytoplasmic side of the membrane. Cysteine 449 serves as a coordination point for heme.

The protein belongs to the cytochrome P450 family. Heme serves as cofactor.

The protein resides in the endoplasmic reticulum membrane. It carries out the reaction 5-methylorsellinate + reduced [NADPH--hemoprotein reductase] + O2 = 4,6-dihydroxy-2-(hydroxymethyl)-3-methylbenzoate + oxidized [NADPH--hemoprotein reductase] + H2O + H(+). The catalysed reaction is 4,6-dihydroxy-2-(hydroxymethyl)-3-methylbenzoate + H(+) = 5,7-dihydroxy-4-methylphthalide + H2O. Its pathway is secondary metabolite biosynthesis; terpenoid biosynthesis. Its function is as follows. Cytochrome P450 monooxygenase; part of the gene cluster that mediates the biosynthesis of mycophenolic acid (MPA), the first isolated antibiotic natural product in the world obtained from a culture of Penicillium brevicompactum in 1893. MpaDE is an endoplasmic reticulum-bound enzyme that catalyzes the conversion of 5-methylorsellinic acid (5MOA) into the phthalide compound 5,7-dihydroxy-4,6-dimethylphthalide (DHMP). MpaDE first catalyzes hydroxylation of 5-MOA to 4,6-dihydroxy-2-(hydroxymethyl)-3-methylbenzoic acid (DHMB), and then acts as a lactone synthase that catalyzes the ring closure to convert DHMB into DHMP. The first step of the pathway is the synthesis of 5-methylorsellinic acid (5MOA) by the cytosolic polyketide synthase mpaC. 5MOA is then converted to the phthalide compound 5,7-dihydroxy-4,6-dimethylphthalide (DHMP) by the endoplasmic reticulum-bound cytochrome P450 monooxygenase mpaDE. MpaDE first catalyzes hydroxylation of 5-MOA to 4,6-dihydroxy-2-(hydroxymethyl)-3-methylbenzoic acid (DHMB). MpaDE then acts as a lactone synthase that catalyzes the ring closure to convert DHMB into DHMP. The next step is the prenylation of DHMP by the Golgi apparatus-associated prenyltransferase mpaA to yield farnesyl-DHMP (FDHMP). The ER-bound oxygenase mpaB then mediates the oxidative cleavage the C19-C20 double bond in FDHMP to yield FDHMP-3C via a mycophenolic aldehyde intermediate. The O-methyltransferase mpaG catalyzes the methylation of FDHMP-3C to yield MFDHMP-3C. After the cytosolic methylation of FDHMP-3C, MFDHMP-3C enters into peroxisomes probably via free diffusion due to its low molecular weight. Upon a peroxisomal CoA ligation reaction, catalyzed by a beta-oxidation component enzyme acyl-CoA ligase ACL891, MFDHMP-3C-CoA would then be restricted to peroxisomes for the following beta-oxidation pathway steps. The peroxisomal beta-oxidation machinery than converts MFDHMP-3C-CoA into MPA_CoA, via a beta-oxidation chain-shortening process. Finally mpaH acts as a peroxisomal acyl-CoA hydrolase with high substrate specificity toward MPA-CoA to release the final product MPA. The chain is Cytochrome P450 monooxygenase mpaDE from Penicillium brevicompactum.